The sequence spans 551 residues: Endolytic murein transglycosylase (551 aa).

Residues Met-1–Lys-187 lie on the Cytoplasmic side of the membrane. Residues Val-38 to Lys-180 form a disordered region. 2 stretches are compositionally biased toward low complexity: residues Pro-100–Arg-110 and Gln-145–Thr-157. Over residues Asp-159–Lys-174 the composition is skewed to basic and acidic residues. Residues Ala-188–Tyr-208 traverse the membrane as a helical segment. Over Gln-209–Asn-551 the chain is Extracellular.

Belongs to the transglycosylase MltG family. In terms of assembly, interacts with RodZ. Interacts with MreC in the elongasome; interaction is strongly reduced when the 90 C-terminal residues of MreC are missing. Interacts with KhpB (also called EloR/Jag) via MltG's N-terminus, suggesting the N-terminus of MltG is cytoplasmic.

It is found in the cell membrane. The catalysed reaction is a peptidoglycan chain = a peptidoglycan chain with N-acetyl-1,6-anhydromuramyl-[peptide] at the reducing end + a peptidoglycan chain with N-acetylglucosamine at the non-reducing end.. In terms of biological role, functions as a peptidoglycan terminase that cleaves nascent peptidoglycan strands endolytically to terminate their elongation. Its function is as follows. Mutations in this gene suppress deletion of PBP2b (penA); truncation at residue 168, undefined changes between residue Ile-447 and Ala-505, and mutation of Ala-505 suppress the penA deletion. Probably part of the elongasome which synthesizes peripheral peptidoglycan. The chain is Endolytic murein transglycosylase from Streptococcus pneumoniae (strain ATCC BAA-255 / R6).